A 371-amino-acid chain; its full sequence is D-alanine--D-alanine ligase (371 aa).

Residues K154 to D361 form the ATP-grasp domain. ATP is bound at residue R182–E237. Mg(2+) contacts are provided by D316, E328, and N330.

It belongs to the D-alanine--D-alanine ligase family. Mg(2+) serves as cofactor. Mn(2+) is required as a cofactor.

The protein localises to the cytoplasm. It carries out the reaction 2 D-alanine + ATP = D-alanyl-D-alanine + ADP + phosphate + H(+). The protein operates within cell wall biogenesis; peptidoglycan biosynthesis. Functionally, cell wall formation. In Mycobacterium sp. (strain KMS), this protein is D-alanine--D-alanine ligase.